Consider the following 129-residue polypeptide: Protein LLP homolog (129 aa).

The span at 1-21 (MAKSLRSKWKRKMRAEKRKKN) shows a compositional bias: basic residues. A disordered region spans residues 1–27 (MAKSLRSKWKRKMRAEKRKKNAPKEAS). Residues Lys67 and Lys74 each participate in a glycyl lysine isopeptide (Lys-Gly) (interchain with G-Cter in SUMO2) cross-link. A compositionally biased stretch (basic residues) spans 100-122 (RQRKRLKAKREKRKGKSKAKAVK). Residues 100–129 (RQRKRLKAKREKRKGKSKAKAVKVAKGLAW) are disordered.

It belongs to the learning-associated protein family. Interacts with CTCF, MYO1C and with the transcriptional machinery, including RNA polymerase II and TBP.

It localises to the nucleus. The protein resides in the nucleolus. Its subcellular location is the chromosome. Functionally, in hippocampal neurons, regulates dendritic and spine growth and synaptic transmission. The polypeptide is Protein LLP homolog (LLPH) (Homo sapiens (Human)).